The chain runs to 552 residues: B-cell linker protein (552 aa).

Residues 50 to 431 are disordered; that stretch reads TGKDTWDRLK…SSISSISSTA (382 aa). A compositionally biased stretch (basic and acidic residues) spans 67-76; that stretch reads PRRDYASEHA. Over residues 77–93 the composition is skewed to acidic residues; the sequence is DNEEEQWSDDFDSDYEN. Tyr91, Tyr103, Tyr115, Tyr194, Tyr205, and Tyr249 each carry phosphotyrosine; by SYK. Residues 188–205 are compositionally biased toward acidic residues; that stretch reads SDDEDNYIVPVDNDDDNY. Basic and acidic residues-rich tracts occupy residues 277–295, 309–322, and 368–382; these read NAEH…KLDA, PKTD…DENH, and NEDK…RGSS. One can recognise an SH2 domain in the interval 442-549; the sequence is WYAATCDRKT…KDSTKLKYIV (108 aa).

As to quaternary structure, associates with PLCG1, VAV1 and NCK1 in a B-cell antigen receptor-dependent fashion. Interacts through its SH2 domain with CD79A. Interacts with VAV3, PLCG2 and GRB2. Following BCR activation, phosphorylated on tyrosine residues by SYK and LYN. When phosphorylated, serves as a scaffold to assemble downstream targets of antigen activation, including PLCG1, VAV1, GRB2 and NCK1. Phosphorylation is required for both Ca(2+) and MAPK signaling pathways. Phosphorylation of Tyr-103, Tyr-194 and Tyr-205 facilitates PLCG1 binding. Phosphorylation of Tyr-115 facilitates BTK binding. Phosphorylation of Tyr-91 facilitates VAV1 and NCK1 binding. In terms of tissue distribution, highly expressed in the bursa, very low expression in ovary and spleen. Expression was variable among B-cell lines. Highly expressed in immature B-cell lines such as DT40 and CL18, low expression was seen in relatively mature B-cell lines, such as 293B9 and 249L4. No expression was seen in T-cell lines.

Its subcellular location is the cytoplasm. The protein localises to the cell membrane. Functions as a central linker protein, downstream of the B-cell receptor (BCR), bridging the SYK kinase to a multitude of signaling pathways and regulating biological outcomes of B-cell function and development. Plays a role in the activation of ERK/EPHB2, MAP kinase p38 and JNK. Modulates AP1 activation. Important for the activation of NF-kappa-B and NFAT. Plays an important role in BCR-mediated PLCG1 and PLCG2 activation and Ca(2+) mobilization and is required for trafficking of the BCR to late endosomes. However, does not seem to be required for pre-BCR-mediated activation of MAP kinase and phosphatidyl-inositol 3 (PI3) kinase signaling. May be required for the RAC1-JNK pathway. Plays a critical role in orchestrating the pro-B cell to pre-B cell transition. Plays a critical role in B-cell development in the bursa. Plays an important role in BCR-induced apoptosis. The sequence is that of B-cell linker protein (BLNK) from Gallus gallus (Chicken).